Here is a 376-residue protein sequence, read N- to C-terminus: Queuine tRNA-ribosyltransferase (376 aa).

The Proton acceptor role is filled by Asp89. Substrate contacts are provided by residues 89–93, Asp143, Gln194, and Gly221; that span reads DSGGF. Positions 252–258 are RNA binding; that stretch reads GVGIPSN. Residue Asp271 is the Nucleophile of the active site. The RNA binding; important for wobble base 34 recognition stretch occupies residues 276-280; the sequence is ARNGR. Zn(2+) is bound by residues Cys309, Cys311, Cys314, and His340.

The protein belongs to the queuine tRNA-ribosyltransferase family. Homodimer. Within each dimer, one monomer is responsible for RNA recognition and catalysis, while the other monomer binds to the replacement base PreQ1. The cofactor is Zn(2+).

The enzyme catalyses 7-aminomethyl-7-carbaguanine + guanosine(34) in tRNA = 7-aminomethyl-7-carbaguanosine(34) in tRNA + guanine. The protein operates within tRNA modification; tRNA-queuosine biosynthesis. Functionally, catalyzes the base-exchange of a guanine (G) residue with the queuine precursor 7-aminomethyl-7-deazaguanine (PreQ1) at position 34 (anticodon wobble position) in tRNAs with GU(N) anticodons (tRNA-Asp, -Asn, -His and -Tyr). Catalysis occurs through a double-displacement mechanism. The nucleophile active site attacks the C1' of nucleotide 34 to detach the guanine base from the RNA, forming a covalent enzyme-RNA intermediate. The proton acceptor active site deprotonates the incoming PreQ1, allowing a nucleophilic attack on the C1' of the ribose to form the product. After dissociation, two additional enzymatic reactions on the tRNA convert PreQ1 to queuine (Q), resulting in the hypermodified nucleoside queuosine (7-(((4,5-cis-dihydroxy-2-cyclopenten-1-yl)amino)methyl)-7-deazaguanosine). This chain is Queuine tRNA-ribosyltransferase, found in Clostridium botulinum (strain Okra / Type B1).